The sequence spans 295 residues: Beta-chimaerin (295 aa).

The Phorbol-ester/DAG-type zinc finger occupies 41 to 91; sequence THNFKVHTFRGPHWCEYCANFMWGLIAQGVRCSDCGLNVHKQCSKHVPNDC. Positions 104–295 constitute a Rho-GAP domain; that stretch reads CDLTTLVKAH…ILIENEDVLF (192 aa).

In terms of tissue distribution, found in cerebellum and testis.

It localises to the membrane. With respect to regulation, in the inactive state, the N terminus protrudes into the active site of the Rho-GAP domain, sterically blocking Rac binding. Phospholipid binding to the Phorbol-ester/DAG-type zinc-finger/C1 domain triggers the cooperative dissociation of these interactions, allowing the N-terminus to move out of the active site and thereby activating the enzyme. Its function is as follows. GTPase-activating protein for p21-rac. In Rattus norvegicus (Rat), this protein is Beta-chimaerin (Chn2).